The chain runs to 310 residues: Imidazolonepropionase (310 aa).

4-imidazolone-5-propanoate-binding residues include tyrosine 42 and histidine 75. N-formimidoyl-L-glutamate is bound at residue tyrosine 42. Histidine 140 provides a ligand contact to Fe(3+). Histidine 140 lines the Zn(2+) pocket. Glutamate 143 provides a ligand contact to 4-imidazolone-5-propanoate. Aspartate 215 contributes to the Fe(3+) binding site. Aspartate 215 lines the Zn(2+) pocket. 2 residues coordinate N-formimidoyl-L-glutamate: asparagine 217 and glycine 219. Serine 220 contributes to the 4-imidazolone-5-propanoate binding site.

Belongs to the metallo-dependent hydrolases superfamily. HutI family. Zn(2+) is required as a cofactor. Requires Fe(3+) as cofactor.

The protein localises to the cytoplasm. It carries out the reaction 4-imidazolone-5-propanoate + H2O = N-formimidoyl-L-glutamate. The protein operates within amino-acid degradation; L-histidine degradation into L-glutamate; N-formimidoyl-L-glutamate from L-histidine: step 3/3. Its function is as follows. Catalyzes the hydrolytic cleavage of the carbon-nitrogen bond in imidazolone-5-propanoate to yield N-formimidoyl-L-glutamate. It is the third step in the universal histidine degradation pathway. This Streptococcus gordonii protein is Imidazolonepropionase (hutI).